The following is a 419-amino-acid chain: Thymidine phosphorylase (419 aa).

The protein belongs to the thymidine/pyrimidine-nucleoside phosphorylase family. In terms of assembly, homodimer.

It carries out the reaction thymidine + phosphate = 2-deoxy-alpha-D-ribose 1-phosphate + thymine. The enzymes which catalyze the reversible phosphorolysis of pyrimidine nucleosides are involved in the degradation of these compounds and in their utilization as carbon and energy sources, or in the rescue of pyrimidine bases for nucleotide synthesis. In Mycoplasmoides pirum (Mycoplasma pirum), this protein is Thymidine phosphorylase (deoA).